We begin with the raw amino-acid sequence, 202 residues long: Large ribosomal subunit protein uL13 (202 aa).

Belongs to the universal ribosomal protein uL13 family. Component of the large ribosomal subunit (LSU). Mature N.crassa ribosomes consist of a small (40S) and a large (60S) subunit. The 40S small subunit contains 1 molecule of ribosomal RNA (18S rRNA) and at least 32 different proteins. The large 60S subunit contains 3 rRNA molecules (26S, 5.8S and 5S rRNA) and at least 42 different proteins.

The protein localises to the cytoplasm. Functionally, component of the ribosome, a large ribonucleoprotein complex responsible for the synthesis of proteins in the cell. The small ribosomal subunit (SSU) binds messenger RNAs (mRNAs) and translates the encoded message by selecting cognate aminoacyl-transfer RNA (tRNA) molecules. The large subunit (LSU) contains the ribosomal catalytic site termed the peptidyl transferase center (PTC), which catalyzes the formation of peptide bonds, thereby polymerizing the amino acids delivered by tRNAs into a polypeptide chain. The nascent polypeptides leave the ribosome through a tunnel in the LSU and interact with protein factors that function in enzymatic processing, targeting, and the membrane insertion of nascent chains at the exit of the ribosomal tunnel. This is Large ribosomal subunit protein uL13 (crp-46) from Neurospora crassa (strain ATCC 24698 / 74-OR23-1A / CBS 708.71 / DSM 1257 / FGSC 987).